The chain runs to 1639 residues: Protein GFS12 (1639 aa).

The 89-residue stretch at 206-294 (LEEKSKLRCL…IRPSNILLSD (89 aa)) folds into the Protein kinase 1 domain. The BEACH domain occupies 336-608 (LKISSHLDWQ…FHGFGVDNKR (273 aa)). In terms of domain architecture, Protein kinase 2 spans 715–788 (IAGDIFSIGC…AKSLLDSPYF (74 aa)). WD repeat units lie at residues 1290 to 1333 (AHHG…CVSS) and 1336 to 1373 (AHEE…LISL). A compositionally biased stretch (low complexity) spans 1377–1398 (SPSDQDQASSDPSSKNNSNPCN). The segment at 1377–1399 (SPSDQDQASSDPSSKNNSNPCNR) is disordered. 3 WD repeats span residues 1465 to 1499 (ALCS…RLFD), 1511 to 1549 (AHDG…TPQP), and 1609 to 1639 (RVKS…RICC).

This sequence belongs to the protein kinase superfamily. Tyr protein kinase family. In terms of assembly, interacts (via protein kinase 2 domain) with BCHC1 (via PH-BEACH domain). In terms of tissue distribution, weakly expressed in the cotyledons of germinating seedlings. Restricted to the vascular tissues of cotyledons. Detected in root tips, apical meristem, young flower buds and receptacles.

Functionally, may act predominantly to suppress BCHC1, which itself is a negative factor in protein storage vacuole (PSV) trafficking regulation and plant effector triggered immunity (ETI). Required for ETI, but not for cell death. This chain is Protein GFS12, found in Arabidopsis thaliana (Mouse-ear cress).